The sequence spans 375 residues: Growth/differentiation factor 8 (375 aa).

The first 18 residues, 1 to 18 (MQKLQISVYIYLFMLIVA), serve as a signal peptide directing secretion. The propeptide occupies 19-266 (GPVDLNENSE…VTDTPKRSRR (248 aa)). N-linked (GlcNAc...) asparagine glycosylation is found at N47 and N71. Intrachain disulfides connect C272–C282, C281–C340, C309–C372, and C313–C374.

The protein belongs to the TGF-beta family. As to quaternary structure, homodimer; disulfide-linked. Interacts with WFIKKN2, leading to inhibit its activity. Interacts with FSTL3. Post-translationally, synthesized as large precursor molecule that undergoes proteolytic cleavage to generate an N-terminal propeptide and a disulfide linked C-terminal dimer, which is the biologically active molecule. The circulating form consists of a latent complex of the C-terminal dimer and other proteins, including its propeptide, which maintain the C-terminal dimer in a latent, inactive state. Ligand activation requires additional cleavage of the prodomain by a tolloid-like metalloproteinase.

The protein resides in the secreted. Acts specifically as a negative regulator of skeletal muscle growth. The protein is Growth/differentiation factor 8 (MSTN) of Bos gaurus (Seladang).